A 484-amino-acid polypeptide reads, in one-letter code: Sulfoacetaldehyde dehydrogenase (484 aa).

NAD(+) is bound by residues 105–110 (LTPVTN), Gly188, and Gly206. The active-site Nucleophile is the Cys239. NAD(+) is bound by residues Glu332 and Leu412.

This sequence belongs to the aldehyde dehydrogenase family.

The enzyme catalyses sulfoacetaldehyde + NAD(+) + CoA = sulfoacetyl-CoA + NADH + H(+). Part of a variant of the sulfo-TK pathway, a D-sulfoquinovose degradation pathway that produces sulfoacetate. Catalyzes the oxidation of sulfoacetaldehyde (SA) to sulfoacetyl-coenzyme A (sulfoacetyl-CoA). Is highly specific for NAD(+), with only residual (1%) activity with NADP(+). Cannot use acetaldehyde. The chain is Sulfoacetaldehyde dehydrogenase from Acholeplasma sp.